The chain runs to 477 residues: tRNA-2-methylthio-N(6)-dimethylallyladenosine synthase (477 aa).

Residues 3 to 120 (KKLHIKTWGC…LPAMIKQVQE (118 aa)) enclose the MTTase N-terminal domain. Residues Cys-12, Cys-49, Cys-83, Cys-157, Cys-161, and Cys-164 each coordinate [4Fe-4S] cluster. Positions 143–375 (RAEGATAFVS…QHVINNQSMQ (233 aa)) constitute a Radical SAM core domain. Residues 378–441 (RAMLGSTQRI…PNSLRGRFIR (64 aa)) form the TRAM domain.

Belongs to the methylthiotransferase family. MiaB subfamily. Monomer. [4Fe-4S] cluster is required as a cofactor.

The protein resides in the cytoplasm. The enzyme catalyses N(6)-dimethylallyladenosine(37) in tRNA + (sulfur carrier)-SH + AH2 + 2 S-adenosyl-L-methionine = 2-methylsulfanyl-N(6)-dimethylallyladenosine(37) in tRNA + (sulfur carrier)-H + 5'-deoxyadenosine + L-methionine + A + S-adenosyl-L-homocysteine + 2 H(+). Its function is as follows. Catalyzes the methylthiolation of N6-(dimethylallyl)adenosine (i(6)A), leading to the formation of 2-methylthio-N6-(dimethylallyl)adenosine (ms(2)i(6)A) at position 37 in tRNAs that read codons beginning with uridine. In Aeromonas salmonicida (strain A449), this protein is tRNA-2-methylthio-N(6)-dimethylallyladenosine synthase.